The primary structure comprises 67 residues: DNA-directed RNA polymerases I, II, and III subunit RPABC5 (67 aa).

Zn(2+)-binding residues include cysteine 7, cysteine 10, cysteine 44, and cysteine 45.

The protein belongs to the archaeal Rpo10/eukaryotic RPB10 RNA polymerase subunit family. As to quaternary structure, component of the RNA polymerase I (Pol I), RNA polymerase II (Pol II) and RNA polymerase III (Pol III) complexes consisting of at least 13, 12 and 17 subunits, respectively. Pol I complex consists of a ten-subunit catalytic core composed of POLR1A/RPA1, POLR1B/RPA2, POLR1C/RPAC1, POLR1D/RPAC2, POLR1H/RPA12, POLR2E/RPABC1, POLR2F/RPABC2, POLR2H/RPABC3, POLR2K/RPABC4 and POLR2L/RPABC5; a mobile stalk subunit POLR1F/RPA43 protruding from the core and additional subunits homologous to general transcription factors POLR1E/RPA49 and POLR1G/RPA34. Part of Pol I pre-initiation complex (PIC), in which Pol I core assembles with RRN3 and promoter-bound UTBF and SL1/TIF-IB complex. Pol II complex contains a ten-subunit catalytic core composed of POLR2A/RPB1, POLR2B/RPB2, POLR2C/RPB3, POLR2I/RPB9, POLR2J/RPB11, POLR2E/RPABC1, POLR2F/RPABC2, POLR2H/RPABC3, POLR2K/RPABC4 and POLR2L/RPABC5 and a mobile stalk composed of two subunits POLR2D/RPB4 and POLR2G/RPB7. Part of Pol II(G) complex, in which Pol II core associates with an additional subunit POLR2M; unlike conventional Pol II, Pol II(G) functions as a transcriptional repressor. Part of TBP-based Pol II pre-initiation complex (PIC), in which Pol II core assembles with general transcription factors and other specific initiation factors including GTF2E1, GTF2E2, GTF2F1, GTF2F2, TCEA1, ERCC2, ERCC3, GTF2H2, GTF2H3, GTF2H4, GTF2H5, GTF2A1, GTF2A2, GTF2B and TBP; this large multi-subunit PIC complex mediates DNA unwinding and targets Pol II core to the transcription start site where the first phosphodiester bond forms. Pol III complex consists of a ten-subunit catalytic core composed of POLR3A/RPC1, POLR3B/RPC2, POLR1C/RPAC1, POLR1D/RPAC2, POLR3K/RPC10, POLR2E/RPABC1, POLR2F/RPABC2, POLR2H/RPABC3, POLR2K/RPABC4 and POLR2L/RPABC5; a mobile stalk composed of two subunits POLR3H/RPC8 and CRCP/RPC9, protruding from the core and functioning primarily in transcription initiation; and additional subunits homologous to general transcription factors of the RNA polymerase II machinery, POLR3C/RPC3-POLR3F/RPC6-POLR3G/RPC7 heterotrimer required for transcription initiation and POLR3D/RPC4-POLR3E/RPC5 heterodimer involved in both transcription initiation and termination.

It localises to the nucleus. Its subcellular location is the nucleolus. Its function is as follows. DNA-dependent RNA polymerase catalyzes the transcription of DNA into RNA using the four ribonucleoside triphosphates as substrates. Common component of RNA polymerases I, II and III which synthesize ribosomal RNA precursors, mRNA precursors and many functional non-coding RNAs, and a small RNAs, such as 5S rRNA and tRNAs, respectively. The sequence is that of DNA-directed RNA polymerases I, II, and III subunit RPABC5 (POLR2L) from Bos taurus (Bovine).